Reading from the N-terminus, the 70-residue chain is Protein SlyX homolog (70 aa).

The protein belongs to the SlyX family.

This chain is Protein SlyX homolog, found in Shewanella putrefaciens (strain CN-32 / ATCC BAA-453).